Reading from the N-terminus, the 523-residue chain is Peptide chain release factor 3 (523 aa).

The tr-type G domain maps to 10–277 (EKRRTFAIIS…SFVDLAPAPE (268 aa)). Residues 19-26 (SHPDAGKT), 87-91 (DTPGH), and 141-144 (NKLD) each bind GTP.

Belongs to the TRAFAC class translation factor GTPase superfamily. Classic translation factor GTPase family. PrfC subfamily.

The protein resides in the cytoplasm. Functionally, increases the formation of ribosomal termination complexes and stimulates activities of RF-1 and RF-2. It binds guanine nucleotides and has strong preference for UGA stop codons. It may interact directly with the ribosome. The stimulation of RF-1 and RF-2 is significantly reduced by GTP and GDP, but not by GMP. In Lactobacillus acidophilus (strain ATCC 700396 / NCK56 / N2 / NCFM), this protein is Peptide chain release factor 3.